The sequence spans 400 residues: Argininosuccinate synthase (400 aa).

8-16 contacts ATP; the sequence is AYSGGLDTS. Residue tyrosine 87 participates in L-citrulline binding. Residue glycine 117 participates in ATP binding. 3 residues coordinate L-aspartate: threonine 119, asparagine 123, and aspartate 124. Position 123 (asparagine 123) interacts with L-citrulline. Residues arginine 127, serine 175, glutamate 260, and tyrosine 272 each coordinate L-citrulline.

It belongs to the argininosuccinate synthase family. Type 1 subfamily. As to quaternary structure, homotetramer.

It is found in the cytoplasm. It carries out the reaction L-citrulline + L-aspartate + ATP = 2-(N(omega)-L-arginino)succinate + AMP + diphosphate + H(+). It participates in amino-acid biosynthesis; L-arginine biosynthesis; L-arginine from L-ornithine and carbamoyl phosphate: step 2/3. The chain is Argininosuccinate synthase from Mycolicibacterium gilvum (strain PYR-GCK) (Mycobacterium gilvum (strain PYR-GCK)).